Reading from the N-terminus, the 281-residue chain is Ribosomal RNA small subunit methyltransferase A (281 aa).

N25, L27, G52, E73, D99, and N118 together coordinate S-adenosyl-L-methionine.

Belongs to the class I-like SAM-binding methyltransferase superfamily. rRNA adenine N(6)-methyltransferase family. RsmA subfamily.

Its subcellular location is the cytoplasm. The catalysed reaction is adenosine(1518)/adenosine(1519) in 16S rRNA + 4 S-adenosyl-L-methionine = N(6)-dimethyladenosine(1518)/N(6)-dimethyladenosine(1519) in 16S rRNA + 4 S-adenosyl-L-homocysteine + 4 H(+). Functionally, specifically dimethylates two adjacent adenosines (A1518 and A1519) in the loop of a conserved hairpin near the 3'-end of 16S rRNA in the 30S particle. May play a critical role in biogenesis of 30S subunits. The chain is Ribosomal RNA small subunit methyltransferase A from Erythrobacter litoralis (strain HTCC2594).